The sequence spans 412 residues: 8-amino-7-oxononanoate synthase (412 aa).

Pyridoxal 5'-phosphate is bound at residue 106 to 107 (GY). Histidine 131 is a substrate binding site. Residues serine 187, histidine 219, and threonine 247 each contribute to the pyridoxal 5'-phosphate site. Lysine 250 bears the N6-(pyridoxal phosphate)lysine mark. Substrate is bound at residue threonine 370.

Belongs to the class-II pyridoxal-phosphate-dependent aminotransferase family. BioF subfamily. As to quaternary structure, homodimer. It depends on pyridoxal 5'-phosphate as a cofactor.

The enzyme catalyses 6-carboxyhexanoyl-[ACP] + L-alanine + H(+) = (8S)-8-amino-7-oxononanoate + holo-[ACP] + CO2. It participates in cofactor biosynthesis; biotin biosynthesis. In terms of biological role, 8-amino-7-oxononanoate synthase; part of the cluster involved in the biosynthesis of biotin (also known as vitamin B8 or vitamin H), a water-soluble vitamin that functions as a prosthetic group of many carboxylases, such as acetyl-CoA carboxylase and pyruvate carboxylase. Catalyzes the decarboxylative condensation of pimeloyl-[acyl-carrier protein] and L-alanine to produce 8-amino-7-oxononanoate (AON). The polypeptide is 8-amino-7-oxononanoate synthase (Emericella nidulans (strain FGSC A4 / ATCC 38163 / CBS 112.46 / NRRL 194 / M139) (Aspergillus nidulans)).